The primary structure comprises 524 residues: Ribonuclease Y (524 aa).

A helical membrane pass occupies residues 7–27 (LGGLLTGIVIAIIASIIASVI). The region spanning 214-299 (TVSVVPLPND…EMVEKARKEV (86 aa)) is the KH domain. The HD domain occupies 340 to 433 (VLSHSIEVAR…VQAADSISAA (94 aa)).

The protein belongs to the RNase Y family.

The protein localises to the cell membrane. In terms of biological role, endoribonuclease that initiates mRNA decay. This is Ribonuclease Y from Acetivibrio thermocellus (strain ATCC 27405 / DSM 1237 / JCM 9322 / NBRC 103400 / NCIMB 10682 / NRRL B-4536 / VPI 7372) (Clostridium thermocellum).